A 571-amino-acid polypeptide reads, in one-letter code: Proline--tRNA ligase (571 aa).

This sequence belongs to the class-II aminoacyl-tRNA synthetase family. ProS type 1 subfamily. In terms of assembly, homodimer.

The protein localises to the cytoplasm. The enzyme catalyses tRNA(Pro) + L-proline + ATP = L-prolyl-tRNA(Pro) + AMP + diphosphate. Functionally, catalyzes the attachment of proline to tRNA(Pro) in a two-step reaction: proline is first activated by ATP to form Pro-AMP and then transferred to the acceptor end of tRNA(Pro). As ProRS can inadvertently accommodate and process non-cognate amino acids such as alanine and cysteine, to avoid such errors it has two additional distinct editing activities against alanine. One activity is designated as 'pretransfer' editing and involves the tRNA(Pro)-independent hydrolysis of activated Ala-AMP. The other activity is designated 'posttransfer' editing and involves deacylation of mischarged Ala-tRNA(Pro). The misacylated Cys-tRNA(Pro) is not edited by ProRS. The polypeptide is Proline--tRNA ligase (Aliivibrio fischeri (strain MJ11) (Vibrio fischeri)).